A 506-amino-acid chain; its full sequence is Protein P7 (506 aa).

RNA-binding stretches follow at residues 128–249 (ISYL…GKRE) and 325–355 (DGSY…FKIS).

Belongs to the phytoreovirus protein P7 family.

It localises to the virion. The protein resides in the host cytoplasm. In terms of biological role, probable component of the transcriptional machinery present in the inner capsid. Displays dsRNA binding activity and may play an important role in the sorting of viral RNA and virion assembly. Together with the RNA-directed RNA polymerase P1 and capping enzyme P5, forms an transcriptional complex positioned near the channels situated at each of the five-fold vertices of the core. The sequence is that of Protein P7 from Alopecurus aequalis (Barnyard grass).